Consider the following 689-residue polypeptide: DNA ligase (689 aa).

Residues 58 to 62 (DQEYD), 107 to 108 (SL), and Glu-138 each bind NAD(+). Lys-140 functions as the N6-AMP-lysine intermediate in the catalytic mechanism. Positions 161, 198, 314, and 338 each coordinate NAD(+). Positions 432, 435, 448, and 453 each coordinate Zn(2+). In terms of domain architecture, BRCT spans 611 to 689 (ASSGTLSGKT…QELLEMLHGG (79 aa)).

It belongs to the NAD-dependent DNA ligase family. LigA subfamily. It depends on Mg(2+) as a cofactor. The cofactor is Mn(2+).

It catalyses the reaction NAD(+) + (deoxyribonucleotide)n-3'-hydroxyl + 5'-phospho-(deoxyribonucleotide)m = (deoxyribonucleotide)n+m + AMP + beta-nicotinamide D-nucleotide.. In terms of biological role, DNA ligase that catalyzes the formation of phosphodiester linkages between 5'-phosphoryl and 3'-hydroxyl groups in double-stranded DNA using NAD as a coenzyme and as the energy source for the reaction. It is essential for DNA replication and repair of damaged DNA. The protein is DNA ligase of Methylacidiphilum infernorum (isolate V4) (Methylokorus infernorum (strain V4)).